The primary structure comprises 300 residues: Tyrosine recombinase XerC (300 aa).

Residues 2 to 88 (ENVNFTLNLF…SLRSFYKFLL (87 aa)) enclose the Core-binding (CB) domain. The 186-residue stretch at 109–294 (KIPHFLYPDE…TKDHLRYVYL (186 aa)) folds into the Tyr recombinase domain. Active-site residues include Arg149, Lys173, His246, Arg249, and His272. Tyr281 functions as the O-(3'-phospho-DNA)-tyrosine intermediate in the catalytic mechanism.

The protein belongs to the 'phage' integrase family. XerC subfamily. In terms of assembly, forms a cyclic heterotetrameric complex composed of two molecules of XerC and two molecules of XerD.

It is found in the cytoplasm. Its function is as follows. Site-specific tyrosine recombinase, which acts by catalyzing the cutting and rejoining of the recombining DNA molecules. The XerC-XerD complex is essential to convert dimers of the bacterial chromosome into monomers to permit their segregation at cell division. It also contributes to the segregational stability of plasmids. The protein is Tyrosine recombinase XerC of Anoxybacillus flavithermus (strain DSM 21510 / WK1).